The primary structure comprises 430 residues: Glutamate-1-semialdehyde 2,1-aminomutase (430 aa).

At Lys269 the chain carries N6-(pyridoxal phosphate)lysine.

This sequence belongs to the class-III pyridoxal-phosphate-dependent aminotransferase family. HemL subfamily. As to quaternary structure, homodimer. Requires pyridoxal 5'-phosphate as cofactor.

Its subcellular location is the cytoplasm. It carries out the reaction (S)-4-amino-5-oxopentanoate = 5-aminolevulinate. It participates in porphyrin-containing compound metabolism; protoporphyrin-IX biosynthesis; 5-aminolevulinate from L-glutamyl-tRNA(Glu): step 2/2. This chain is Glutamate-1-semialdehyde 2,1-aminomutase, found in Desulfitobacterium hafniense (strain Y51).